We begin with the raw amino-acid sequence, 314 residues long: Methionyl-tRNA formyltransferase (314 aa).

110–113 (SLLP) provides a ligand contact to (6S)-5,6,7,8-tetrahydrofolate.

It belongs to the Fmt family.

It catalyses the reaction L-methionyl-tRNA(fMet) + (6R)-10-formyltetrahydrofolate = N-formyl-L-methionyl-tRNA(fMet) + (6S)-5,6,7,8-tetrahydrofolate + H(+). Attaches a formyl group to the free amino group of methionyl-tRNA(fMet). The formyl group appears to play a dual role in the initiator identity of N-formylmethionyl-tRNA by promoting its recognition by IF2 and preventing the misappropriation of this tRNA by the elongation apparatus. The polypeptide is Methionyl-tRNA formyltransferase (Bacillus mycoides (strain KBAB4) (Bacillus weihenstephanensis)).